The chain runs to 230 residues: Ribonuclease 3 (230 aa).

Residues 19–134 form the RNase III domain; that stretch reads ELLTIALTHR…LLGAIYLEHG (116 aa). Mg(2+) is bound at residue Glu-44. Asp-48 is an active-site residue. Mg(2+)-binding residues include Asp-120 and Glu-123. A DRBM domain is found at 161-229; that stretch reads DWKSSLQELT…AASAYKTLDE (69 aa).

Belongs to the ribonuclease III family. Homodimer. The cofactor is Mg(2+).

It is found in the cytoplasm. The catalysed reaction is Endonucleolytic cleavage to 5'-phosphomonoester.. In terms of biological role, digests double-stranded RNA. Involved in the processing of primary rRNA transcript to yield the immediate precursors to the all rRNAs (23S, 16S and 5S). Processes some mRNAs, and tRNAs when they are encoded in the rRNA operon. Processes pre-crRNA and tracrRNA of type II CRISPR loci if present in the organism. The sequence is that of Ribonuclease 3 (rnc) from Mycolicibacterium smegmatis (strain ATCC 700084 / mc(2)155) (Mycobacterium smegmatis).